The following is an 808-amino-acid chain: MENNSLPMDPAMDSSFMDGLLLEGCWLETTDASEFLNFSPSTSVAPFDPSSFMWSPTQDTSNSLSQMYGQDCPERSSLEDQNQGRDLSTFNRRWWIGPSGHHGFSVMERLVQAVTHIKDFTSERGSLIQLWVPVDRGGKRVLTTKEQPFSHDPMCQRLAHYREISENYQFSTEQEDSDSSSRDLVGLPGRVFLGKVPEWTPDVRFFKNEEYPRVQHAQDCDVRGTLAIPVFEQGSQICLGVIEVVMTTQMVKLSPDLESICRALQAVDLRSTEIPIPPSLKGPDFSYQAALPEIRNLLRCACETHKLPLAQTWVSCLKQSKTGCRHNDENYIHCVSTIDDACYVGDPTVREFHEACSEHHLLKGQGVVGEAFLTNGPCFSSDVSSYKKSEYPLSHHATMFGLHGTVAIRLRCIHTGSVDFVLEFFLPKNCRDIEEQRKMLNALSTIMAHVPRSLRTVTQKELEEEGDSMVSEVIEKGVTLPKIENTTEVHQSISTPQNVGLVFDGGTTEMGELGSEYGKGVSVNENNTFSSASGFNRVTEKKRTKAEKNITLDVLRQYFAGSLKDAAKSIGVCPTTLKRICRQHGIQRWPSRKIKKVGHSLQKIQRVIDSVEGVSGHHLPIGSFYASFPNLAASPEASSLQQQSKITTFLSYSHSPPAKSPGSSCSHSSSCSSETQVIKEDPTDKTRLVSRSFKETQTTHLSPSSQEDDFLRVKVSYEEEKIRFKMRNSHRLKDLLWEIAKRFSIEDVSRYDLKYLDEDNEWVLLRCDDDVEECVDVCRSFPGQTIKLLLQLSSSYLPERSSVSGCLS.

A compositionally biased stretch (polar residues) spans 56–68 (PTQDTSNSLSQMY). Positions 56–83 (PTQDTSNSLSQMYGQDCPERSSLEDQNQ) are disordered. The region spanning 536-617 (NRVTEKKRTK…IDSVEGVSGH (82 aa)) is the RWP-RK domain. Positions 660–680 (SPGSSCSHSSSCSSETQVIKE) are disordered. Residues 663–673 (SSCSHSSSCSS) show a composition bias toward low complexity. A PB1 domain is found at 710-793 (FLRVKVSYEE…QTIKLLLQLS (84 aa)).

Its subcellular location is the nucleus. Functionally, probable transcription factor. The protein is Protein NLP5 (NLP5) of Arabidopsis thaliana (Mouse-ear cress).